A 490-amino-acid polypeptide reads, in one-letter code: Betaine aldehyde dehydrogenase (490 aa).

I27 and D93 together coordinate K(+). Residue 150 to 152 (GAW) coordinates NAD(+). Catalysis depends on K162, which acts as the Charge relay system. 176–179 (KPSE) lines the NAD(+) pocket. K(+) is bound at residue V180. NAD(+) is bound at residue 230 to 233 (GTDT). Residue L246 participates in K(+) binding. The active-site Proton acceptor is E252. NAD(+) contacts are provided by G254, C286, and E387. The active-site Nucleophile is the C286. At C286 the chain carries Cysteine sulfenic acid (-SOH). The K(+) site is built by K457 and G460. Residue E464 is the Charge relay system of the active site.

The protein belongs to the aldehyde dehydrogenase family. In terms of assembly, dimer of dimers. The cofactor is K(+).

The enzyme catalyses betaine aldehyde + NAD(+) + H2O = glycine betaine + NADH + 2 H(+). It participates in amine and polyamine biosynthesis; betaine biosynthesis via choline pathway; betaine from betaine aldehyde: step 1/1. Involved in the biosynthesis of the osmoprotectant glycine betaine. Catalyzes the irreversible oxidation of betaine aldehyde to the corresponding acid. This chain is Betaine aldehyde dehydrogenase, found in Pseudomonas syringae pv. syringae (strain B728a).